Consider the following 653-residue polypeptide: ATP-dependent zinc metalloprotease FtsH 1 (653 aa).

At 1 to 7 (MSRFFKS) the chain is on the cytoplasmic side. A helical transmembrane segment spans residues 8–28 (AAFPILIVVVLAFFAQRLINP). Residues 29–105 (GDSGPRYDYS…FDIEGTKSNG (77 aa)) lie on the Extracellular side of the membrane. The chain crosses the membrane as a helical span at residues 106–126 (WLSLLTYVLPFLIFIGFWIFL). The Cytoplasmic segment spans residues 127 to 653 (MNQVQGGGSK…MHFPERPELA (527 aa)). 198 to 205 (GPPGTGKT) provides a ligand contact to ATP. A Zn(2+)-binding site is contributed by H420. E421 is a catalytic residue. Zn(2+) contacts are provided by H424 and D496. Residues 603–653 (EEVFGAEASPPPDVPLPPATERGRDTPRPLPRPGLAGGAAEMHFPERPELA) form a disordered region. Residues 611-620 (SPPPDVPLPP) are compositionally biased toward pro residues.

The protein in the central section; belongs to the AAA ATPase family. This sequence in the C-terminal section; belongs to the peptidase M41 family. Homohexamer. Zn(2+) serves as cofactor.

The protein localises to the cell membrane. Its function is as follows. Acts as a processive, ATP-dependent zinc metallopeptidase for both cytoplasmic and membrane proteins. Plays a role in the quality control of integral membrane proteins. This is ATP-dependent zinc metalloprotease FtsH 1 from Conexibacter woesei (strain DSM 14684 / CCUG 47730 / CIP 108061 / JCM 11494 / NBRC 100937 / ID131577).